Reading from the N-terminus, the 376-residue chain is S-adenosylmethionine synthase (376 aa).

H15 is an ATP binding site. D17 contacts Mg(2+). E43 lines the K(+) pocket. 2 residues coordinate L-methionine: E56 and Q92. Positions 92 to 102 are flexible loop; it reads QSKEIANQVDR. ATP is bound by residues 156-158, D231, 237-238, A254, and K258; these read DMK and RK. Residue D231 coordinates L-methionine. L-methionine is bound at residue K262.

Belongs to the AdoMet synthase family. As to quaternary structure, homotetramer; dimer of dimers. The cofactor is Mg(2+). Requires K(+) as cofactor.

The protein localises to the cytoplasm. The enzyme catalyses L-methionine + ATP + H2O = S-adenosyl-L-methionine + phosphate + diphosphate. The protein operates within amino-acid biosynthesis; S-adenosyl-L-methionine biosynthesis; S-adenosyl-L-methionine from L-methionine: step 1/1. Its function is as follows. Catalyzes the formation of S-adenosylmethionine (AdoMet) from methionine and ATP. The overall synthetic reaction is composed of two sequential steps, AdoMet formation and the subsequent tripolyphosphate hydrolysis which occurs prior to release of AdoMet from the enzyme. This chain is S-adenosylmethionine synthase, found in Mycoplasmopsis pulmonis (strain UAB CTIP) (Mycoplasma pulmonis).